Consider the following 501-residue polypeptide: Ammonium transporter 1 member 1 (501 aa).

The next 10 helical transmembrane spans lie at 8–28 (LAVLLGPNATAAANYICGQLG), 46–66 (LLFSAYLVFSMQLGFAMLCAG), 81–101 (VLDAAAGGLFYYLFGYAFAFG), 128–148 (FLYQWAFAIAAAGITSGSIAE), 152–172 (FVAYLIYSSFLTGFVYPVVSH), 199–219 (FAGSGVVHMVGGIAGLWGALI), 243–263 (LVVLGTFLLWFGWYGFNPGSF), 333–353 (VVEPWAAIICGFVAALVLLGC), 366–386 (LEAAQLHGGCGAWGLIFTALF), and 419–439 (LIQIIVITGWVSATMGTLFFI). Threonine 460 is modified (phosphothreonine). 4 positions are modified to phosphoserine: serine 475, serine 488, serine 490, and serine 492.

It belongs to the ammonia transporter channel (TC 1.A.11.2) family. Self interacts. Interacts with the receptor protein kinases CEPR2, At2g28990 and PAM74. Highly expressed in roots. Expressed in root tips, root hairs, root epidermis, rhizodermis, cortex and pericycle. Expressed in leaves epidermal and mesophyll cells.

It localises to the cell membrane. In terms of biological role, high affinity ammonium transporter probably involved in ammonium uptake from the soil, long-distance transport to the shoots and re-uptake of apoplastic ammonium that derives from photorespiration in shoots. Contributes with AMT1-3 to the overall ammonium uptake capacity in roots under nitrogen-deficiency conditions. In Arabidopsis thaliana (Mouse-ear cress), this protein is Ammonium transporter 1 member 1 (AMT1-1).